Consider the following 351-residue polypeptide: Histidine-rich glycoprotein (351 aa).

The signal sequence occupies residues 1-23 (MFTSLKKVATFSFLVWISQYSGS). Residues 24–47 (NSCSSSLVKHIPQTGSNLTFDRVL) constitute a propeptide that is removed on maturation. Residue asparagine 40 is glycosylated (N-linked (GlcNAc...) asparagine). The span at 57 to 91 (LHEEHHHHHPEEHHEPHHEEHHHHHPEEHHEPHHE) shows a compositional bias: basic and acidic residues. The segment at 57 to 351 (LHEEHHHHHP…DAHHHHHHHH (295 aa)) is disordered. 6 tandem repeats follow at residues 59–74 (EEHHHHHPEEHHEPHH), 75–90 (EEHHHHHPEEHHEPHH), 91–107 (EEHHHHHPHPHHHHHHH), 108–123 (PPHHHHHLGHHHHHHH), 124–138 (AAHHHHHEEHHHHHH), and 139–153 (AAHHHHHEEHHHHHH). The segment at 59–90 (EEHHHHHPEEHHEPHHEEHHHHHPEEHHEPHH) is 2 X 16 AA tandem repeats. The tract at residues 91–123 (EEHHHHHPHPHHHHHHHPPHHHHHLGHHHHHHH) is 2 X 17 AA tandem repeats. Positions 92-351 (EHHHHHPHPH…DAHHHHHHHH (260 aa)) are enriched in basic residues. Residues 124–153 (AAHHHHHEEHHHHHHAAHHHHHEEHHHHHH) form a 2 X 15 AA tandem repeats region. The tract at residues 173-351 (APHHHHHHHH…DAHHHHHHHH (179 aa)) is 18 X 10 AA tandem repeats.

This Plasmodium lophurae protein is Histidine-rich glycoprotein.